Consider the following 376-residue polypeptide: Palmitoyl-[acyl-carrier-protein] 4-desaturase 2, chloroplastic (376 aa).

The transit peptide at 1 to 33 directs the protein to the chloroplast; it reads MELHLALRASPLPAADPGRRPPPPRGNFATNCT. Glutamate 114, glutamate 149, histidine 152, glutamate 202, glutamate 235, and histidine 238 together coordinate Fe cation.

The protein belongs to the fatty acid desaturase type 2 family. Homodimer. Requires Fe(2+) as cofactor. As to expression, preferentially expressed in the flower labellum.

Its subcellular location is the plastid. The protein localises to the chloroplast stroma. The enzyme catalyses hexadecanoyl-[ACP] + 2 reduced [2Fe-2S]-[ferredoxin] + O2 + 2 H(+) = (4Z)-hexadecenoyl-[ACP] + 2 oxidized [2Fe-2S]-[ferredoxin] + 2 H2O. The catalysed reaction is octadecanoyl-[ACP] + 2 reduced [2Fe-2S]-[ferredoxin] + O2 + 2 H(+) = (9Z)-octadecenoyl-[ACP] + 2 oxidized [2Fe-2S]-[ferredoxin] + 2 H2O. Its pathway is lipid metabolism; fatty acid metabolism. In terms of biological role, converts stearoyl-ACP to oleoyl-ACP by introduction of a cis double bond between carbons 9 and 10 of the acyl chain. Converts palmitoyl-ACP to (4Z)-hexadec-4-enoyl-ACP by introduction of a cis double bond between carbons 4 and 5 of the acyl chain. Catalyzes the desaturation of saturated fatty acid 18:0 and 16:0 to generate 18:1 (delta-9) and 16:1 (delta-4) intermediates, expected to give rise to 9-alkenes and 12-alkenes, respectively. This is Palmitoyl-[acyl-carrier-protein] 4-desaturase 2, chloroplastic (SAD2) from Ophrys arachnitiformis subsp. archipelagi (Orchid).